The chain runs to 731 residues: Actin filament-associated protein 1 (731 aa).

Met-1 carries the N-acetylmethionine modification. The segment at 46–90 (VKDHAQKAETNNLPAPPQMPLPEIPQPWLPPDSGPPPLPTSSLPE) is disordered. A compositionally biased stretch (pro residues) spans 59–84 (PAPPQMPLPEIPQPWLPPDSGPPPLP). The SH3-binding signature appears at 70–73 (PQPW). An SH2-binding 1 motif is present at residues 93–96 (YEEA). Residues 118-138 (GSSYESYDEEEEDGKGKKTQH) are disordered. The region spanning 152–248 (DAKICAFLLR…WLKVIKEAYS (97 aa)) is the PH 1 domain. The interval 252-318 (GPVDPECSPP…SKSEAKGTVS (67 aa)) is disordered. Residues 271-284 (AELEKKLSSERPSS) show a composition bias toward basic and acidic residues. Ser-283 and Ser-284 each carry phosphoserine. Residues 348 to 442 (DVPTCGYLNV…WIGILLAETG (95 aa)) form the PH 2 domain. An SH2-binding 2 motif is present at residues 452–457 (YDYIDV). The disordered stretch occupies residues 511-550 (SLKNKKPPASSNGLPVKGRAPSSQQKKVESAGGVKRTASN). Position 549 is a phosphoserine (Ser-549). The stretch at 558-649 (KNRVEADAKR…VKESLKKALA (92 aa)) forms a coiled coil. Residues 595-638 (DLRAAIEVNAGRKTQVALEDKLKRLEEECKQREAERVSLELELT) are interaction with F-actin. Residues 657–731 (AIEPKSGTSS…AREWELKNGT (75 aa)) are disordered. Phosphoserine occurs at positions 665, 666, and 669. Thr-676 bears the Phosphothreonine mark. Residues 678–687 (ENSPISSCDT) show a composition bias toward polar residues. 2 positions are modified to phosphoserine: Ser-680 and Ser-688. The segment covering 721–731 (KAREWELKNGT) has biased composition (basic and acidic residues).

Monomer and homomultimer. Interacts via its C-terminus with F-actin; probably involving AFAP1 multimers. Interacts with activated SRC SH3-SH2 domains. Interacts via its PH 1 domain with PRKCA, PRKCB and PRKCI. Post-translationally, phosphorylated on tyrosine residues. As to expression, widely expressed with highest levels in brain.

The protein localises to the cytoplasm. Its subcellular location is the cytoskeleton. It is found in the stress fiber. Its function is as follows. Can cross-link actin filaments into both network and bundle structures. May modulate changes in actin filament integrity and induce lamellipodia formation. May function as an adapter molecule that links other proteins, such as SRC and PKC to the actin cytoskeleton. The polypeptide is Actin filament-associated protein 1 (Afap1) (Rattus norvegicus (Rat)).